Reading from the N-terminus, the 871-residue chain is Phosphoinositide 3-kinase regulatory subunit 5 (871 aa).

The residue at position 1 (Met1) is an N-acetylmethionine. Residues 25 to 101 form a heterodimerization region; the sequence is SLGRRSAPWS…TPHFPPDSDL (77 aa). Residues 381 to 413 form a disordered region; sequence MDSGYVEDSEENSEWPQKPGSQKRQGHRRPGQK. Phosphoserine is present on residues Ser451 and Ser500. The tract at residues 646-746 is interaction with beta-gamma G protein dimers; the sequence is PILADMLLYY…WSNLEKVCTS (101 aa).

As to quaternary structure, heterodimer of a catalytic subunit (PIK3CG/p120) and a regulatory (PIK3R5a/p101) subunit. Interacts with beta-gamma G protein dimers.

The protein resides in the nucleus. The protein localises to the cytoplasm. It localises to the cell membrane. With respect to regulation, greatly activated by G gamma proteins. In terms of biological role, regulatory subunit of the PI3K gamma complex. Required for recruitment of the catalytic subunit to the plasma membrane via interaction with beta-gamma G protein dimers. Required for G protein-mediated activation of PIK3CG. The protein is Phosphoinositide 3-kinase regulatory subunit 5 (Pik3r5) of Mus musculus (Mouse).